The following is a 172-amino-acid chain: 3-hydroxydecanoyl-[acyl-carrier-protein] dehydratase (172 aa).

Residue His-71 is part of the active site.

It belongs to the thioester dehydratase family. FabA subfamily. As to quaternary structure, homodimer.

It localises to the cytoplasm. It catalyses the reaction a (3R)-hydroxyacyl-[ACP] = a (2E)-enoyl-[ACP] + H2O. It carries out the reaction (3R)-hydroxydecanoyl-[ACP] = (2E)-decenoyl-[ACP] + H2O. The catalysed reaction is (2E)-decenoyl-[ACP] = (3Z)-decenoyl-[ACP]. It participates in lipid metabolism; fatty acid biosynthesis. In terms of biological role, necessary for the introduction of cis unsaturation into fatty acids. Catalyzes the dehydration of (3R)-3-hydroxydecanoyl-ACP to E-(2)-decenoyl-ACP and then its isomerization to Z-(3)-decenoyl-ACP. Can catalyze the dehydratase reaction for beta-hydroxyacyl-ACPs with saturated chain lengths up to 16:0, being most active on intermediate chain length. In Escherichia coli (strain SE11), this protein is 3-hydroxydecanoyl-[acyl-carrier-protein] dehydratase.